Consider the following 341-residue polypeptide: Methionine import ATP-binding protein MetN 2 (341 aa).

The region spanning 2-241 (IEASELTKVY…PKAPLTQEFI (240 aa)) is the ABC transporter domain. 38-45 (GYSGAGKS) provides a ligand contact to ATP.

This sequence belongs to the ABC transporter superfamily. Methionine importer (TC 3.A.1.24) family. The complex is composed of two ATP-binding proteins (MetN), two transmembrane proteins (MetI) and a solute-binding protein (MetQ).

It is found in the cell membrane. The catalysed reaction is L-methionine(out) + ATP + H2O = L-methionine(in) + ADP + phosphate + H(+). It catalyses the reaction D-methionine(out) + ATP + H2O = D-methionine(in) + ADP + phosphate + H(+). Part of the ABC transporter complex MetNIQ involved in methionine import. Responsible for energy coupling to the transport system. The chain is Methionine import ATP-binding protein MetN 2 from Shouchella clausii (strain KSM-K16) (Alkalihalobacillus clausii).